Here is a 90-residue protein sequence, read N- to C-terminus: E22 protein (90 aa).

The protein is E22 protein (43) of Bacillus subtilis (Bacteriophage SP01).